Reading from the N-terminus, the 418-residue chain is Gamma-glutamyl phosphate reductase (418 aa).

It belongs to the gamma-glutamyl phosphate reductase family.

The protein localises to the cytoplasm. The catalysed reaction is L-glutamate 5-semialdehyde + phosphate + NADP(+) = L-glutamyl 5-phosphate + NADPH + H(+). It functions in the pathway amino-acid biosynthesis; L-proline biosynthesis; L-glutamate 5-semialdehyde from L-glutamate: step 2/2. In terms of biological role, catalyzes the NADPH-dependent reduction of L-glutamate 5-phosphate into L-glutamate 5-semialdehyde and phosphate. The product spontaneously undergoes cyclization to form 1-pyrroline-5-carboxylate. The protein is Gamma-glutamyl phosphate reductase of Halothermothrix orenii (strain H 168 / OCM 544 / DSM 9562).